The following is a 359-amino-acid chain: DNA replication and repair protein RecF (359 aa).

An ATP-binding site is contributed by 30-37 (GPNAKGKT).

It belongs to the RecF family.

The protein resides in the cytoplasm. Its function is as follows. The RecF protein is involved in DNA metabolism; it is required for DNA replication and normal SOS inducibility. RecF binds preferentially to single-stranded, linear DNA. It also seems to bind ATP. This Protochlamydia amoebophila (strain UWE25) protein is DNA replication and repair protein RecF.